The primary structure comprises 431 residues: O-phosphoseryl-tRNA(Sec) selenium transferase (431 aa).

Positions 1 to 36 (MRGLIPDHMLERGRTVLDSYREPVERLLSERRMPEE) are tetramerization. Arginine 67 serves as a coordination point for pyridoxal 5'-phosphate. The interval 88 to 98 (GRSGTLVDPQP) is phosphate loop (P-loop). Substrate is bound by residues arginine 89, serine 90, and glutamine 97. Lysine 269 carries the post-translational modification N6-(pyridoxal phosphate)lysine. Residue arginine 298 participates in substrate binding.

It belongs to the SepSecS family. As to quaternary structure, homotetramer. Requires pyridoxal 5'-phosphate as cofactor.

The enzyme catalyses O-phospho-L-seryl-tRNA(Sec) + selenophosphate + H2O = L-selenocysteinyl-tRNA(Sec) + 2 phosphate. The protein operates within aminoacyl-tRNA biosynthesis; selenocysteinyl-tRNA(Sec) biosynthesis; selenocysteinyl-tRNA(Sec) from L-seryl-tRNA(Sec) (archaeal/eukaryal route): step 2/2. Converts O-phosphoseryl-tRNA(Sec) to selenocysteinyl-tRNA(Sec) required for selenoprotein biosynthesis. In Methanopyrus kandleri (strain AV19 / DSM 6324 / JCM 9639 / NBRC 100938), this protein is O-phosphoseryl-tRNA(Sec) selenium transferase (spcS).